We begin with the raw amino-acid sequence, 1228 residues long: Calcium-transporting ATPase (1228 aa).

Over 1-63 (MEEVIKNAHT…FELILNQFDD (63 aa)) the chain is Cytoplasmic. The chain crosses the membrane as a helical span at residues 64-81 (LLVKILLLAAFISFVLTL). Residues 82–92 (LDMKHKKIEIC) are Extracellular-facing. Residues 93–112 (DFIEPLVIVLILILNAAVGV) traverse the membrane as a helical segment. Residues 113–270 (WQECNAEKSL…IDLFGQQLSK (158 aa)) are Cytoplasmic-facing. Residues 271 to 291 (IIFVICVTVWIINFKHFSDPI) traverse the membrane as a helical segment. The Extracellular segment spans residues 292–300 (HGSFLYGCL). Residues 301–321 (YYFKISVALAVAAIPEGLPAV) traverse the membrane as a helical segment. Over 322-974 (ITTCLALGTR…IYNNMKAFIR (653 aa)) the chain is Cytoplasmic. Catalysis depends on Asp-358, which acts as the 4-aspartylphosphate intermediate. 2 disordered regions span residues 452-478 (MKND…IPLK) and 562-613 (MPAE…LKNA). Residues 589–604 (FFSSKNDNSHITSTLN) show a composition bias toward polar residues. An ATP-binding site is contributed by Lys-716. Residues 975 to 994 (YLISSNIGEVASIFITALLG) form a helical membrane-spanning segment. The Extracellular portion of the chain corresponds to 995-1000 (IPDSLA). A helical transmembrane segment spans residues 1001-1021 (PVQLLWVNLVTDGLPATALGF). Over 1022–1042 (NPPEHDVMKCKPRHKNDNLIN) the chain is Cytoplasmic. Residues 1043-1067 (GLTLLRYIIIGTYVGIATVSIFVYW) traverse the membrane as a helical segment. Topologically, residues 1068 to 1118 (FLFYPDSDMHTLINFYQLSHYNQCKAWNNFRVNKVYDMSEDHCSYFSAGKI) are extracellular. A helical transmembrane segment spans residues 1119–1140 (KASTLSLSVLVLIEMFNALNAL). The Cytoplasmic portion of the chain corresponds to 1141–1151 (SEYNSLFEIPP). Residues 1152–1172 (WRNMYLVLATIGSLLLHVLIL) traverse the membrane as a helical segment. At 1173–1185 (YIPPLARIFGVVP) the chain is on the extracellular side. Residues 1186–1206 (LSAYDWFLVFLWSFPVIILDE) traverse the membrane as a helical segment. At 1207–1228 (IIKFYAKRKLKEEQRTKKIKID) the chain is on the cytoplasmic side.

It belongs to the cation transport ATPase (P-type) (TC 3.A.3) family.

The protein localises to the membrane. It catalyses the reaction Ca(2+)(in) + ATP + H2O = Ca(2+)(out) + ADP + phosphate + H(+). This magnesium-dependent enzyme catalyzes the hydrolysis of ATP coupled with the transport of the calcium. The chain is Calcium-transporting ATPase (ATP6) from Plasmodium falciparum (isolate K1 / Thailand).